The following is a 379-amino-acid chain: Cytochrome b (379 aa).

A run of 4 helical transmembrane segments spans residues 33–53 (FGSL…FLAM), 77–98 (WTIR…FIHV), 113–133 (WNIG…GYVL), and 178–198 (FFAL…IHLL). Heme b contacts are provided by His83 and His97. Residues His182 and His196 each contribute to the heme b site. His201 contacts a ubiquinone. Helical transmembrane passes span 226–246 (TKDF…TLFY), 288–308 (PGGV…PFLQ), 320–340 (LSQF…WIGG), and 347–367 (FISI…FIMP).

The protein belongs to the cytochrome b family. As to quaternary structure, the cytochrome bc1 complex contains 11 subunits: 3 respiratory subunits (MT-CYB, CYC1 and UQCRFS1), 2 core proteins (UQCRC1 and UQCRC2) and 6 low-molecular weight proteins (UQCRH/QCR6, UQCRB/QCR7, UQCRQ/QCR8, UQCR10/QCR9, UQCR11/QCR10 and a cleavage product of UQCRFS1). This cytochrome bc1 complex then forms a dimer. Heme b is required as a cofactor.

The protein localises to the mitochondrion inner membrane. Component of the ubiquinol-cytochrome c reductase complex (complex III or cytochrome b-c1 complex) that is part of the mitochondrial respiratory chain. The b-c1 complex mediates electron transfer from ubiquinol to cytochrome c. Contributes to the generation of a proton gradient across the mitochondrial membrane that is then used for ATP synthesis. The chain is Cytochrome b (MT-CYB) from Lepilemur ruficaudatus (Red-tailed sportive lemur).